A 297-amino-acid chain; its full sequence is Juvenile hormone acid O-methyltransferase (297 aa).

This sequence belongs to the methyltransferase superfamily. In terms of tissue distribution, predominantly expressed in corpora allata. Also expressed at low level in testis.

The catalysed reaction is (2E,6E)-farnesoate + S-adenosyl-L-methionine = methyl (2E,6E)-farnesoate + S-adenosyl-L-homocysteine. It catalyses the reaction juvenile hormone III carboxylate + S-adenosyl-L-methionine = juvenile hormone III + S-adenosyl-L-homocysteine. O-methyltransferase that transfers a methyl group from S-adenosyl-L-methionine (SAM) to the carboxyl group of juvenile hormone acids to produce active juvenile hormones in the corpora allata, the last step during juvenile hormone biosynthesis. Also able to methylate farnesoate to methyl farnesoate. In Drosophila melanogaster (Fruit fly), this protein is Juvenile hormone acid O-methyltransferase.